Consider the following 258-residue polypeptide: Small ribosomal subunit protein mS23 (258 aa).

Polar residues predominate over residues 230–239; the sequence is KKNSTKQSWA. A disordered region spans residues 230–258; sequence KKNSTKQSWAEATEEKEEQDSAEPEELKL. The span at 241–258 shows a compositional bias: acidic residues; it reads ATEEKEEQDSAEPEELKL.

Belongs to the mitochondrion-specific ribosomal protein mS23 family. Component of the mitochondrial small ribosomal subunit.

Its subcellular location is the mitochondrion. In Eremothecium gossypii (strain ATCC 10895 / CBS 109.51 / FGSC 9923 / NRRL Y-1056) (Yeast), this protein is Small ribosomal subunit protein mS23 (RSM25).